A 113-amino-acid chain; its full sequence is ATP-dependent Clp protease adapter protein ClpS (113 aa).

Over residues 1–11 the composition is skewed to basic and acidic residues; sequence MHRDLHMMSDR. Residues 1–25 form a disordered region; sequence MHRDLHMMSDRSEDDGDTSILTATK.

This sequence belongs to the ClpS family. Binds to the N-terminal domain of the chaperone ClpA.

Functionally, involved in the modulation of the specificity of the ClpAP-mediated ATP-dependent protein degradation. The protein is ATP-dependent Clp protease adapter protein ClpS of Roseobacter denitrificans (strain ATCC 33942 / OCh 114) (Erythrobacter sp. (strain OCh 114)).